We begin with the raw amino-acid sequence, 898 residues long: Filament-like plant protein 7 (898 aa).

Coiled coils occupy residues 23 to 224 (EVVA…TAEA) and 287 to 320 (EKINNLTEQLCLLEEENKTLREALNKKVSELQFS). Disordered regions lie at residues 429–482 (DNRP…DIKS), 693–723 (PGNQNLSRKTVEEEANDKTASASENELKLEE), and 777–835 (KSNN…GGNS). Low complexity predominate over residues 434 to 459 (SSPICSSDSISATGPVENESNENSSE). A compositionally biased stretch (polar residues) spans 460–469 (ATKTSGTVYS). The stretch at 703-764 (VEEEANDKTA…KALTNSKETA (62 aa)) forms a coiled coil. Basic and acidic residues predominate over residues 808–822 (MKAEDHNTGESKDQK).

The protein belongs to the FPP family. Interacts with WPP/MAF proteins.

The polypeptide is Filament-like plant protein 7 (FPP7) (Arabidopsis thaliana (Mouse-ear cress)).